We begin with the raw amino-acid sequence, 816 residues long: Phosphatidylinositol 4-kinase beta (816 aa).

3 disordered regions span residues 1–30 (MGDT…GSLL), 101–120 (EDEM…RRRR), and 248–318 (AHRK…SFSS). Glycine 2 carries the post-translational modification N-acetylglycine. An interaction with ACBD3 region spans residues 2–68 (GDTIVEPAPL…VKLLHGGVAI (67 aa)). The 214-residue stretch at 29–242 (LLSVITEGVG…GTKLRKLILS (214 aa)) folds into the PIK helical domain. Serine 258 carries the phosphoserine modification. The residue at position 263 (threonine 263) is a Phosphothreonine. Serine 266, serine 275, serine 277, serine 284, and serine 294 each carry phosphoserine. 2 stretches are compositionally biased toward polar residues: residues 278–297 (DATA…SNPK) and 306–318 (SSST…SFSS). Residue serine 428 is modified to Phosphoserine. Position 438 is a phosphothreonine (threonine 438). Serine 511 is modified (phosphoserine). A phosphothreonine mark is found at threonine 517 and threonine 519. Positions 535–801 (EPWQEKVRRI…MVDGSMRSIT (267 aa)) constitute a PI3K/PI4K catalytic domain. The tract at residues 541-547 (VRRIREG) is G-loop. The segment at 668 to 676 (QVKDRHNGN) is catalytic loop. The segment at 687–711 (HIDFGFILSSSPRNLGFETSAFKLT) is activation loop.

Belongs to the PI3/PI4-kinase family. Type III PI4K subfamily. Interacts with ARF1 and ARF3 in the Golgi complex, but not with ARF4, ARF5 or ARF6. Interacts with NCS1/FREQ in a calcium-independent manner. Interacts with CALN1/CABP8 and CALN2/CABP7; in a calcium-dependent manner; this interaction competes with NCS1/FREQ binding. Interacts with ACBD3. Interacts with ARMH3, YWHAB, YWHAE, YWHAG, YWHAH, YWHAQ, YWHAZ and SFN. Interacts with GGA2 (via VHS domain); the interaction is important for PI4KB location at the Golgi apparatus membrane. Interacts with ATG9A. The cofactor is Mg(2+). Requires Mn(2+) as cofactor.

Its subcellular location is the endomembrane system. The protein localises to the mitochondrion outer membrane. It is found in the rough endoplasmic reticulum membrane. The protein resides in the golgi apparatus. It localises to the golgi apparatus membrane. It catalyses the reaction a 1,2-diacyl-sn-glycero-3-phospho-(1D-myo-inositol) + ATP = a 1,2-diacyl-sn-glycero-3-phospho-(1D-myo-inositol 4-phosphate) + ADP + H(+). With respect to regulation, inhibited by wortmannin. Increased kinase activity upon interaction with NCS1/FREQ. In terms of biological role, phosphorylates phosphatidylinositol (PI) in the first committed step in the production of the second messenger inositol-1,4,5,-trisphosphate (PIP). May regulate Golgi disintegration/reorganization during mitosis, possibly via its phosphorylation. Involved in Golgi-to-plasma membrane trafficking. The chain is Phosphatidylinositol 4-kinase beta (PI4KB) from Bos taurus (Bovine).